The sequence spans 329 residues: Terpene synthase 7 (329 aa).

The short motif at 99–104 (DDLYLE) is the DDxx(x)D/E motif element. Residues 230–238 (NDIHSFNKE) carry the NDxxSxxxD/E motif motif.

Belongs to the terpene synthase family.

Its function is as follows. Terpene synthase that converts its substrate farnesyl diphosphate (FPP) into 6 yet unidentified sesquiterpenes. The polypeptide is Terpene synthase 7 (Dictyostelium purpureum (Slime mold)).